The chain runs to 399 residues: G2/mitotic-specific cyclin-B2 (399 aa).

The segment at 58–78 is disordered; sequence PVKATKGPGKMTNTVVPPKPP.

Belongs to the cyclin family. Cyclin AB subfamily. As to quaternary structure, interacts with the CDK1 protein kinase to form a serine/threonine kinase holoenzyme complex also known as maturation promoting factor (MPF). The cyclin subunit imparts substrate specificity to the complex.

In terms of biological role, essential for the control of the cell cycle at the G2/M (mitosis) transition. This is G2/mitotic-specific cyclin-B2 (CCNB2) from Gallus gallus (Chicken).